The sequence spans 486 residues: Arginine/agmatine antiporter (486 aa).

12 consecutive transmembrane segments (helical) span residues 12-32 (LGAI…GIFS), 41-61 (AGAG…FFIA), 85-105 (GFGP…QIFG), 129-149 (NTIP…FIVL), 160-180 (IIGT…TAFA), 211-231 (STML…VMSA), 242-262 (ATLL…ILPF), 296-316 (VGLL…VAEI), 341-361 (LSLY…YFST), 367-387 (MLSI…AFLF), 418-438 (LWLI…LLAL), and 461-481 (EVTK…LFST).

This sequence belongs to the amino acid-polyamine-organocation (APC) superfamily. Basic amino acid/polyamine antiporter (APA) (TC 2.A.3.2) family.

Its subcellular location is the cell inner membrane. In terms of biological role, catalyzes the exchange of L-arginine for agmatine. The arginine uptake by the bacterium in the macrophage may be a virulence factor against the host innate immune response. In Chlamydia caviae (strain ATCC VR-813 / DSM 19441 / 03DC25 / GPIC) (Chlamydophila caviae), this protein is Arginine/agmatine antiporter (aaxC).